Consider the following 414-residue polypeptide: Arrestin domain-containing protein 3 (414 aa).

2 short sequence motifs (PPxY motif) span residues 346-349 (PPSY) and 391-394 (PPLY). Residues 393–414 (LYSEIDPNPDQSADDRPSCPSR) form a disordered region. Over residues 405 to 414 (ADDRPSCPSR) the composition is skewed to basic and acidic residues.

The protein belongs to the arrestin family. As to quaternary structure, interacts (via PPxY motifs) with NEDD4 (via WW domains). Interacts with ADRB2. Interacts with ADRB3. Interacts with HGS (via PPxY motifs). Does not bind TXN (thioredoxin). Interacts with ITCH.

It is found in the cytoplasm. The protein localises to the cell membrane. Its subcellular location is the lysosome. The protein resides in the endosome. It localises to the early endosome. Adapter protein that plays a role in regulating cell-surface expression of adrenergic receptors and probably also other G protein-coupled receptors. Plays a role in NEDD4-mediated ubiquitination and endocytosis af activated ADRB2 and subsequent ADRB2 degradation. May recruit NEDD4 to ADRB2. Alternatively, may function as adapter protein that does not play a major role in recruiting NEDD4 to ADRB2, but rather plays a role in a targeting ADRB2 to endosomes. This Pongo abelii (Sumatran orangutan) protein is Arrestin domain-containing protein 3 (ARRDC3).